The sequence spans 117 residues: Large ribosomal subunit protein bL20 (117 aa).

Belongs to the bacterial ribosomal protein bL20 family.

In terms of biological role, binds directly to 23S ribosomal RNA and is necessary for the in vitro assembly process of the 50S ribosomal subunit. It is not involved in the protein synthesizing functions of that subunit. This chain is Large ribosomal subunit protein bL20, found in Rickettsia akari (strain Hartford).